The primary structure comprises 280 residues: MDVLKSLPVTDNHIHVDDKHGYGAEKVAKTFYNAGGKVMIVLNKPTFDGNLTASMDILVRDVEIINKNTPVKAFGLVGVHPAELTYLMKFMSLEEAKQRIVDALNYAKKLVEEYDFIVGIGEVGRPHYPVSEDVWKASNEILKYCMELAKDIGCAIQIHAESSTEEQFKEFSEMAKEVGLNPEKVVKHHCGNMVLEGERYGIFPSILASRVNEDVVKKSLRFVMETDYIDDLKRPGVALGIKTVPRVTRRLIEKGVLDEEGVYKIHKENIERIYDMDLEL.

The protein belongs to the metallo-dependent hydrolases superfamily.

This is an uncharacterized protein from Methanocaldococcus jannaschii (strain ATCC 43067 / DSM 2661 / JAL-1 / JCM 10045 / NBRC 100440) (Methanococcus jannaschii).